The following is a 425-amino-acid chain: MAPITTSRVEFDEIPTVVGIFSAFGLVFTVSLFAWICCQRRSAKSNKTPPYKFVHVLKGVDIYPENLSSKKKFGGDDKSEAKRKAALPNLSLHLDLEKRDLNGNFPKTNPKAGSSSDLENVTPKLFPETEKEAVSPESLKSSTSLTSEEKQEKLGTLFLSLEYNFEKKAFVVNIKEAQGLPAMDEQSMTSDPYIKMTILPEKKHKVKTRVLRKTLDPVFDETFTFYGVPYPHIQELSLHFTVLSFDRFSRDDVIGEVLVPLSGIELSDGKMLMTREIIKRNAKKSSGRGELLVSLCYQSTTNTLTVVVLKARHLPKSDVSGLSDPYVKVNLYHAKKRISKKKTHVKKCTPNAVFNELFVFDIPCESLEEISVEFLVLDSERGSRNEVIGRLVLGATAEGSGGGHWKEICDFPRRQIAKWHMLCDG.

At 1 to 16 (MAPITTSRVEFDEIPT) the chain is on the vesicular side. The helical transmembrane segment at 17-37 (VVGIFSAFGLVFTVSLFAWIC) threads the bilayer. Residues 38–425 (CQRRSAKSNK…IAKWHMLCDG (388 aa)) lie on the Cytoplasmic side of the membrane. Disordered stretches follow at residues 102 to 121 (NGNF…LENV) and 126 to 147 (FPET…SLTS). The span at 105 to 119 (FPKTNPKAGSSSDLE) shows a compositional bias: polar residues. The residue at position 135 (Ser-135) is a Phosphoserine; by MAPK8. Positions 137 to 146 (ESLKSSTSLT) are enriched in low complexity. C2 domains lie at 153–274 (KLGT…MLMT) and 287–420 (GRGE…AKWH). The Ca(2+) site is built by Asp-246, Ser-249, and Asp-252.

This sequence belongs to the synaptotagmin family. In terms of assembly, interacts with KIF1A; the interaction increases in presence of calcium and decreases when SYT4 is phosphorylated at Ser-135. The cofactor is Ca(2+). Post-translationally, phosphorylation at Ser-135 by MAPK8/JNK1 reduces interaction with KIF1A and neuronal dense core vesicles mobility. As to expression, widely expressed. Expressed in the brain. Expressed in pituitary gland, cerebellum, cortex, hypothalamus and hippocampus.

Its subcellular location is the cytoplasmic vesicle. It localises to the secretory vesicle. The protein localises to the neuronal dense core vesicle membrane. In terms of biological role, synaptotagmin family member which does not bind Ca(2+). Involved in neuronal dense core vesicles (DCVs) mobility through its interaction with KIF1A. Upon increased neuronal activity, phosphorylation by MAPK8/JNK1 destabilizes the interaction with KIF1A and captures DCVs to synapses. Plays a role in dendrite formation by melanocytes. The protein is Synaptotagmin-4 (Syt4) of Rattus norvegicus (Rat).